We begin with the raw amino-acid sequence, 708 residues long: Glycine--tRNA ligase beta subunit (708 aa).

Belongs to the class-II aminoacyl-tRNA synthetase family. Tetramer of two alpha and two beta subunits.

It is found in the cytoplasm. It carries out the reaction tRNA(Gly) + glycine + ATP = glycyl-tRNA(Gly) + AMP + diphosphate. This chain is Glycine--tRNA ligase beta subunit, found in Methylobacillus flagellatus (strain ATCC 51484 / DSM 6875 / VKM B-1610 / KT).